A 252-amino-acid polypeptide reads, in one-letter code: Carbohydrate deacetylase (252 aa).

Mg(2+) is bound by residues H59 and H122.

Belongs to the YdjC deacetylase family. In terms of assembly, homodimer. Mg(2+) is required as a cofactor.

Functionally, probably catalyzes the deacetylation of acetylated carbohydrates an important step in the degradation of oligosaccharides. The chain is Carbohydrate deacetylase from Vibrio cholerae serotype O1 (strain ATCC 39541 / Classical Ogawa 395 / O395).